The primary structure comprises 362 residues: S-adenosylmethionine:tRNA ribosyltransferase-isomerase (362 aa).

Belongs to the QueA family. As to quaternary structure, monomer.

Its subcellular location is the cytoplasm. The catalysed reaction is 7-aminomethyl-7-carbaguanosine(34) in tRNA + S-adenosyl-L-methionine = epoxyqueuosine(34) in tRNA + adenine + L-methionine + 2 H(+). It functions in the pathway tRNA modification; tRNA-queuosine biosynthesis. Its function is as follows. Transfers and isomerizes the ribose moiety from AdoMet to the 7-aminomethyl group of 7-deazaguanine (preQ1-tRNA) to give epoxyqueuosine (oQ-tRNA). The polypeptide is S-adenosylmethionine:tRNA ribosyltransferase-isomerase (Syntrophus aciditrophicus (strain SB)).